Here is a 26-residue protein sequence, read N- to C-terminus: 83 kDa hypersensitivity protein (26 aa).

The interval 1-26 is disordered; sequence FTPEDFISAPRRGEAIPDPKGELAVF. The span at 11–26 shows a compositional bias: basic and acidic residues; the sequence is RRGEAIPDPKGELAVF.

This chain is 83 kDa hypersensitivity protein, found in Trichophyton tonsurans (Scalp ringworm fungus).